The following is a 180-amino-acid chain: Alkyl hydroperoxide reductase AhpD (180 aa).

The Proton donor role is filled by Cys131. Residues Cys131 and Cys134 are joined by a disulfide bond. Cys134 acts as the Cysteine sulfenic acid (-SOH) intermediate in catalysis.

Belongs to the AhpD family.

The catalysed reaction is N(6)-[(R)-dihydrolipoyl]-L-lysyl-[lipoyl-carrier protein] + a hydroperoxide = N(6)-[(R)-lipoyl]-L-lysyl-[lipoyl-carrier protein] + an alcohol + H2O. Its function is as follows. Antioxidant protein with alkyl hydroperoxidase activity. Required for the reduction of the AhpC active site cysteine residues and for the regeneration of the AhpC enzyme activity. This Beijerinckia indica subsp. indica (strain ATCC 9039 / DSM 1715 / NCIMB 8712) protein is Alkyl hydroperoxide reductase AhpD.